Consider the following 354-residue polypeptide: Uroporphyrinogen decarboxylase (354 aa).

Substrate contacts are provided by residues 27 to 31 (RQAGR), D77, Y154, T209, and H327.

This sequence belongs to the uroporphyrinogen decarboxylase family. Homodimer.

The protein resides in the cytoplasm. It carries out the reaction uroporphyrinogen III + 4 H(+) = coproporphyrinogen III + 4 CO2. The protein operates within porphyrin-containing compound metabolism; protoporphyrin-IX biosynthesis; coproporphyrinogen-III from 5-aminolevulinate: step 4/4. Its function is as follows. Catalyzes the decarboxylation of four acetate groups of uroporphyrinogen-III to yield coproporphyrinogen-III. The chain is Uroporphyrinogen decarboxylase from Sodalis glossinidius (strain morsitans).